The following is a 385-amino-acid chain: Succinyl-diaminopimelate desuccinylase (385 aa).

Position 73 (H73) interacts with Zn(2+). D75 is an active-site residue. Position 106 (D106) interacts with Zn(2+). E141 functions as the Proton acceptor in the catalytic mechanism. 3 residues coordinate Zn(2+): E142, E170, and H359.

Belongs to the peptidase M20A family. DapE subfamily. As to quaternary structure, homodimer. Requires Zn(2+) as cofactor. Co(2+) is required as a cofactor.

The catalysed reaction is N-succinyl-(2S,6S)-2,6-diaminopimelate + H2O = (2S,6S)-2,6-diaminopimelate + succinate. It functions in the pathway amino-acid biosynthesis; L-lysine biosynthesis via DAP pathway; LL-2,6-diaminopimelate from (S)-tetrahydrodipicolinate (succinylase route): step 3/3. Functionally, catalyzes the hydrolysis of N-succinyl-L,L-diaminopimelic acid (SDAP), forming succinate and LL-2,6-diaminopimelate (DAP), an intermediate involved in the bacterial biosynthesis of lysine and meso-diaminopimelic acid, an essential component of bacterial cell walls. The chain is Succinyl-diaminopimelate desuccinylase from Methylorubrum extorquens (strain CM4 / NCIMB 13688) (Methylobacterium extorquens).